The chain runs to 235 residues: Octanoyltransferase (235 aa).

The region spanning 52–229 (KNRQASMIFC…SICSALEYIN (178 aa)) is the BPL/LPL catalytic domain. Substrate is bound by residues 89–96 (RGGKITWH), 159–161 (AIG), and 172–174 (GFA). The active-site Acyl-thioester intermediate is C190.

Belongs to the LipB family.

Its subcellular location is the cytoplasm. The catalysed reaction is octanoyl-[ACP] + L-lysyl-[protein] = N(6)-octanoyl-L-lysyl-[protein] + holo-[ACP] + H(+). It participates in protein modification; protein lipoylation via endogenous pathway; protein N(6)-(lipoyl)lysine from octanoyl-[acyl-carrier-protein]: step 1/2. In terms of biological role, catalyzes the transfer of endogenously produced octanoic acid from octanoyl-acyl-carrier-protein onto the lipoyl domains of lipoate-dependent enzymes. Lipoyl-ACP can also act as a substrate although octanoyl-ACP is likely to be the physiological substrate. This Tropheryma whipplei (strain Twist) (Whipple's bacillus) protein is Octanoyltransferase.